The chain runs to 420 residues: S-adenosylmethionine synthase (420 aa).

An ATP-binding site is contributed by histidine 16. Residue aspartate 18 coordinates Mg(2+). Glutamate 44 serves as a coordination point for K(+). L-methionine contacts are provided by glutamate 57 and glutamine 100. The interval 100-110 (QSADIAQGVDK) is flexible loop. Residues 175-177 (DGK), 251-252 (KF), aspartate 260, 266-267 (RK), alanine 283, and lysine 287 contribute to the ATP site. Position 260 (aspartate 260) interacts with L-methionine. Lysine 291 is a binding site for L-methionine.

The protein belongs to the AdoMet synthase family. Homotetramer; dimer of dimers. Mg(2+) is required as a cofactor. The cofactor is K(+).

Its subcellular location is the cytoplasm. It catalyses the reaction L-methionine + ATP + H2O = S-adenosyl-L-methionine + phosphate + diphosphate. Its pathway is amino-acid biosynthesis; S-adenosyl-L-methionine biosynthesis; S-adenosyl-L-methionine from L-methionine: step 1/1. Its function is as follows. Catalyzes the formation of S-adenosylmethionine (AdoMet) from methionine and ATP. The overall synthetic reaction is composed of two sequential steps, AdoMet formation and the subsequent tripolyphosphate hydrolysis which occurs prior to release of AdoMet from the enzyme. This Trichodesmium erythraeum (strain IMS101) protein is S-adenosylmethionine synthase.